The primary structure comprises 457 residues: Adenylyltransferase and sulfurtransferase MOCS3 (457 aa).

A disordered region spans residues 40–60 (ANGGGNGDGLADEGGERNTGT). A Phosphothreonine modification is found at threonine 63. ATP-binding positions include glycine 102, aspartate 123, 130 to 134 (SNFHR), lysine 147, and 191 to 192 (DN). Residues cysteine 233 and cysteine 236 each contribute to the Zn(2+) site. Residue cysteine 250 is the Glycyl thioester intermediate; for adenylyltransferase activity of the active site. Positions 309 and 312 each coordinate Zn(2+). The 98-residue stretch at 358–455 (ESQPHLLFDV…WTRKVDPDFP (98 aa)) folds into the Rhodanese domain. Residue cysteine 414 is the Cysteine persulfide intermediate; for sulfurtransferase activity of the active site.

The protein in the N-terminal section; belongs to the HesA/MoeB/ThiF family. UBA4 subfamily. Requires Zn(2+) as cofactor.

It is found in the cytoplasm. Its subcellular location is the cytosol. The catalysed reaction is [molybdopterin-synthase sulfur-carrier protein]-C-terminal Gly-Gly + ATP + H(+) = [molybdopterin-synthase sulfur-carrier protein]-C-terminal Gly-Gly-AMP + diphosphate. It carries out the reaction [molybdopterin-synthase sulfur-carrier protein]-C-terminal Gly-Gly-AMP + S-sulfanyl-L-cysteinyl-[cysteine desulfurase] + AH2 = [molybdopterin-synthase sulfur-carrier protein]-C-terminal-Gly-aminoethanethioate + L-cysteinyl-[cysteine desulfurase] + A + AMP + 2 H(+). The protein operates within tRNA modification; 5-methoxycarbonylmethyl-2-thiouridine-tRNA biosynthesis. It participates in cofactor biosynthesis; molybdopterin biosynthesis. Functionally, plays a central role in 2-thiolation of mcm(5)S(2)U at tRNA wobble positions of cytosolic tRNA(Lys), tRNA(Glu) and tRNA(Gln). Also essential during biosynthesis of the molybdenum cofactor. Acts by mediating the C-terminal thiocarboxylation of sulfur carriers URM1 and MOCS2A. Its N-terminus first activates URM1 and MOCS2A as acyl-adenylates (-COAMP), then the persulfide sulfur on the catalytic cysteine is transferred to URM1 and MOCS2A to form thiocarboxylation (-COSH) of their C-terminus. The reaction probably involves hydrogen sulfide that is generated from the persulfide intermediate and that acts as a nucleophile towards URM1 and MOCS2A. Subsequently, a transient disulfide bond is formed. Does not use thiosulfate as sulfur donor; NFS1 probably acting as a sulfur donor for thiocarboxylation reactions. The chain is Adenylyltransferase and sulfurtransferase MOCS3 from Drosophila willistoni (Fruit fly).